The following is a 383-amino-acid chain: MSYTNTKEETQIINIENNDIKKRKFIENNNTNNNTNSNTNSNNKNNNNNNNNKSNNKKQNNNNKKPRLKFTYDYNYKIISPFQKFLDYGICPTLNELYSEFYHILNENKCQKLKMELDELKKMNKGDKPIPIDFDPSKICHQHSKEDIEQIIFDPNDRHLIELAVRKFCGFLQKESNMVLMEMIILSIGLLKSIEFLHFTLEIERDGGIFTTVIPKSSPNTTTTTTSTTTTTTTIINDDNTLITTKDSNEQTSSSSSSSTAITTNTNCSNSKSSSQPITRRRTPGGVFYKLINLHIPTEFKSNLFSISSLFKYKNERKKKGFGTLLDLKDKLLDFTSNNSNGNNDNNENSQEQINSKKFNKLLNEVDEEFDKLCVSSKNEIMT.

2 disordered regions span residues 27-66 (ENNN…NKKP) and 242-281 (LITT…ITRR). 2 stretches are compositionally biased toward low complexity: residues 28–63 (NNNT…NNNN) and 242–275 (LITT…KSSS).

This is an uncharacterized protein from Dictyostelium discoideum (Social amoeba).